The following is a 101-amino-acid chain: NADH-quinone oxidoreductase subunit K (101 aa).

3 helical membrane-spanning segments follow: residues 4-24 (LSHYLVLGALLFAIGVVGIFL), 30-50 (IILLMSIELMLLAVNMNFVAF), and 61-81 (IFVFFILTVAAAEAAIGLAIL).

The protein belongs to the complex I subunit 4L family. In terms of assembly, NDH-1 is composed of 14 different subunits. Subunits NuoA, H, J, K, L, M, N constitute the membrane sector of the complex.

The protein localises to the cell inner membrane. It catalyses the reaction a quinone + NADH + 5 H(+)(in) = a quinol + NAD(+) + 4 H(+)(out). Its function is as follows. NDH-1 shuttles electrons from NADH, via FMN and iron-sulfur (Fe-S) centers, to quinones in the respiratory chain. The immediate electron acceptor for the enzyme in this species is believed to be ubiquinone. Couples the redox reaction to proton translocation (for every two electrons transferred, four hydrogen ions are translocated across the cytoplasmic membrane), and thus conserves the redox energy in a proton gradient. The polypeptide is NADH-quinone oxidoreductase subunit K (Nitrosomonas europaea (strain ATCC 19718 / CIP 103999 / KCTC 2705 / NBRC 14298)).